Here is a 182-residue protein sequence, read N- to C-terminus: CDP-diacylglycerol--glycerol-3-phosphate 3-phosphatidyltransferase (182 aa).

The Cytoplasmic portion of the chain corresponds to 2–12 (QFNIPTLLTLF). Residues 13–37 (RVILIPFLVVVFYLPFAWAPMVSAL) traverse the membrane as a helical segment. Residues 38–60 (IFCIAAITDWFDGFLARRWNQST) lie on the Periplasmic side of the membrane. The helical transmembrane segment at 61–81 (RFGAFLDPVADKVLVAIAMVL) threads the bilayer. Over 82–86 (VTEHY) the chain is Cytoplasmic. Residues 87 to 107 (HSWWVTLPAATMIAREIIISA) traverse the membrane as a helical segment. Residues 108-145 (LREWMAELGKRSSVAVSWIGKVKTTAQMVALAWLLWRP) are Periplasmic-facing. The chain crosses the membrane as a helical span at residues 146–168 (NIWVEYAGIALFFVAAVLTLWSM). Residues 169-181 (LQYLSAARGDLLD) are Cytoplasmic-facing.

Belongs to the CDP-alcohol phosphatidyltransferase class-I family.

The protein localises to the cell inner membrane. The catalysed reaction is a CDP-1,2-diacyl-sn-glycerol + sn-glycerol 3-phosphate = a 1,2-diacyl-sn-glycero-3-phospho-(1'-sn-glycero-3'-phosphate) + CMP + H(+). Its pathway is phospholipid metabolism; phosphatidylglycerol biosynthesis; phosphatidylglycerol from CDP-diacylglycerol: step 1/2. Its function is as follows. Catalyzes the conversion of cytidine diphosphate diacylglycerol (CDP-DG) and glycerol 3-phosphate into phosphatidylglycerol. Essential for the synthesis of anionic phospholipids, thereby playing a role in balancing the ratio of zwitterionic and anionic phospholipids, which is thought to be important for normal membrane function. In Salmonella choleraesuis (strain SC-B67), this protein is CDP-diacylglycerol--glycerol-3-phosphate 3-phosphatidyltransferase.